A 756-amino-acid chain; its full sequence is Polyribonucleotide nucleotidyltransferase (756 aa).

2 residues coordinate Mg(2+): aspartate 492 and aspartate 498. Positions 559–618 (PQHAEVFVNPDVIRIIIGPGGKNIKAITAATGASIDIEDSGKVSIFAPTYEAMEMAREMV) constitute a KH domain. The S1 motif domain maps to 628–702 (GKNYVGKVRK…SRKAVLLEEQ (75 aa)). Residues 703–756 (GVEWNPEDTARPSGPPRDRGDRGDRGGRGDRGGDRRGGDRGGRGGDRGRGGDRR) are disordered. The span at 718 to 756 (PRDRGDRGDRGGRGDRGGDRRGGDRGGRGGDRGRGGDRR) shows a compositional bias: basic and acidic residues.

The protein belongs to the polyribonucleotide nucleotidyltransferase family. Requires Mg(2+) as cofactor.

It localises to the cytoplasm. The catalysed reaction is RNA(n+1) + phosphate = RNA(n) + a ribonucleoside 5'-diphosphate. Involved in mRNA degradation. Catalyzes the phosphorolysis of single-stranded polyribonucleotides processively in the 3'- to 5'-direction. The protein is Polyribonucleotide nucleotidyltransferase of Nitratidesulfovibrio vulgaris (strain DSM 19637 / Miyazaki F) (Desulfovibrio vulgaris).